A 369-amino-acid chain; its full sequence is Anhydro-N-acetylmuramic acid kinase (369 aa).

12–19 (GTSLDGVD) is a binding site for ATP.

The protein belongs to the anhydro-N-acetylmuramic acid kinase family.

It catalyses the reaction 1,6-anhydro-N-acetyl-beta-muramate + ATP + H2O = N-acetyl-D-muramate 6-phosphate + ADP + H(+). It participates in amino-sugar metabolism; 1,6-anhydro-N-acetylmuramate degradation. The protein operates within cell wall biogenesis; peptidoglycan recycling. Functionally, catalyzes the specific phosphorylation of 1,6-anhydro-N-acetylmuramic acid (anhMurNAc) with the simultaneous cleavage of the 1,6-anhydro ring, generating MurNAc-6-P. Is required for the utilization of anhMurNAc either imported from the medium or derived from its own cell wall murein, and thus plays a role in cell wall recycling. The polypeptide is Anhydro-N-acetylmuramic acid kinase (Actinobacillus pleuropneumoniae serotype 3 (strain JL03)).